Consider the following 480-residue polypeptide: Caspase-8 (480 aa).

A propeptide spanning residues 1–218 is cleaved from the precursor; that stretch reads MDFQSCLYAI…ELCDSPREQD (218 aa). DED domains are found at residues 3-80 and 101-177; these read FQSC…NFLD and YRVM…KIED. Phosphoserine occurs at positions 188 and 213. An N6-acetyllysine modification is found at K226. H319 is a catalytic residue. Position 336 is a phosphotyrosine (Y336). Residue C362 is part of the active site. A propeptide spanning residues 377–387 is cleaved from the precursor; it reads FEQQNHTLEVD. S389 carries the phosphoserine; by CDK1 modification.

Belongs to the peptidase C14A family. In terms of assembly, heterotetramer that consists of two anti-parallel arranged heterodimers, each one formed by a 18 kDa (p18) and a 10 kDa (p10) subunit. Component of the death-induced signaling complex (DISC) composed of cell surface receptor FAS/CD95 or TNFRSF1A, adapter protein FADD and the CASP8 protease; recruitment of CASP8 to the complex is required for processing of CASP8 into the p18 and p10 subunits. Component of the AIM2 PANoptosome complex, a multiprotein complex that drives inflammatory cell death (PANoptosis). Interacts with CFLAR and PEA15. Interacts with RFFL and RNF34; negatively regulate CASP8 through proteasomal degradation. Interacts with TNFAIP8L2. Interacts with CASP8AP2. Interacts with NOL3; decreases CASP8 activity in a mitochondria localization- and phosphorylation-dependent manner and this interaction is dissociated by calcium. Interacts with UBR2. Interacts with RIPK1. Interacts with stimulated TNFRSF10B; this interaction is followed by CASP8 proteolytic cleavage and activation. In terms of processing, generation of the subunits requires association with the death-inducing signaling complex (DISC), whereas additional processing is likely due to the autocatalytic activity of the activated protease. GZMB and CASP10 can be involved in these processing events. (Microbial infection) Proteolytically cleaved by the cowpox virus CRMA death inhibitory protein. Post-translationally, phosphorylation on Ser-389 during mitosis by CDK1 inhibits activation by proteolysis and prevents apoptosis. This phosphorylation occurs in cancer cell lines, as well as in primary breast tissues and lymphocytes. As to expression, expressed in a wide variety of tissues. Highest expression in spleen, thymus, lung, liver and kidney. Lower expression in heart, brain, testis and skeletal muscle.

It localises to the cytoplasm. The protein resides in the nucleus. It catalyses the reaction Strict requirement for Asp at position P1 and has a preferred cleavage sequence of (Leu/Asp/Val)-Glu-Thr-Asp-|-(Gly/Ser/Ala).. Its activity is regulated as follows. CASP8 activity is restricted by RIPK1. With respect to regulation, (Microbial infection) Inhibited by baculovirus p35 protein P35. Its function is as follows. Thiol protease that plays a key role in programmed cell death by acting as a molecular switch for apoptosis, necroptosis and pyroptosis, and is required to prevent tissue damage during embryonic development and adulthood. Initiator protease that induces extrinsic apoptosis by mediating cleavage and activation of effector caspases responsible for FAS/CD95-mediated and TNFRSF1A-induced cell death. Cleaves and activates effector caspases CASP3, CASP4, CASP6, CASP7, CASP9 and CASP10. Binding to the adapter molecule FADD recruits it to either receptor FAS/CD95 or TNFRSF1A. The resulting aggregate called the death-inducing signaling complex (DISC) performs CASP8 proteolytic activation. The active dimeric enzyme is then liberated from the DISC and free to activate downstream apoptotic proteases. Proteolytic fragments of the N-terminal propeptide (termed CAP3, CAP5 and CAP6) are likely retained in the DISC. In addition to extrinsic apoptosis, also acts as a negative regulator of necroptosis: acts by cleaving RIPK1 at 'Asp-325', which is crucial to inhibit RIPK1 kinase activity, limiting TNF-induced apoptosis, necroptosis and inflammatory response. Also able to initiate pyroptosis by mediating cleavage and activation of gasdermin-C and -D (GSDMC and GSDMD, respectively): gasdermin cleavage promotes release of the N-terminal moiety that binds to membranes and forms pores, triggering pyroptosis. Initiates pyroptosis following inactivation of MAP3K7/TAK1. Also acts as a regulator of innate immunity by mediating cleavage and inactivation of N4BP1 downstream of TLR3 or TLR4, thereby promoting cytokine production. May participate in the Granzyme B (GZMB) cell death pathways. Cleaves PARP1 and PARP2. This chain is Caspase-8, found in Mus musculus (Mouse).